The following is a 167-amino-acid chain: Endoribonuclease YbeY (167 aa).

Zn(2+) is bound by residues H131, H135, and H141.

The protein belongs to the endoribonuclease YbeY family. It depends on Zn(2+) as a cofactor.

The protein resides in the cytoplasm. Single strand-specific metallo-endoribonuclease involved in late-stage 70S ribosome quality control and in maturation of the 3' terminus of the 16S rRNA. The protein is Endoribonuclease YbeY of Rickettsia conorii (strain ATCC VR-613 / Malish 7).